Here is a 98-residue protein sequence, read N- to C-terminus: NADH-ubiquinone oxidoreductase chain 4L (98 aa).

The next 2 helical transmembrane spans lie at 1-21 and 48-68; these read MTLIHFSFCSAFILGLTGLAL and PLHLTIYLSSMMLYIMLPFAA.

Belongs to the complex I subunit 4L family. Core subunit of respiratory chain NADH dehydrogenase (Complex I) which is composed of 45 different subunits.

Its subcellular location is the mitochondrion inner membrane. The enzyme catalyses a ubiquinone + NADH + 5 H(+)(in) = a ubiquinol + NAD(+) + 4 H(+)(out). Core subunit of the mitochondrial membrane respiratory chain NADH dehydrogenase (Complex I) which catalyzes electron transfer from NADH through the respiratory chain, using ubiquinone as an electron acceptor. Part of the enzyme membrane arm which is embedded in the lipid bilayer and involved in proton translocation. In Xenopus laevis (African clawed frog), this protein is NADH-ubiquinone oxidoreductase chain 4L (mt-nd4l).